The primary structure comprises 237 residues: Purine nucleoside phosphorylase DeoD-type (237 aa).

His-5 contacts a purine D-ribonucleoside. Phosphate contacts are provided by residues Gly-21, Arg-25, Arg-44, and 88–91 (RVGS). Residues 180-182 (EME) and 204-205 (SD) contribute to the a purine D-ribonucleoside site. Asp-205 functions as the Proton donor in the catalytic mechanism.

This sequence belongs to the PNP/UDP phosphorylase family. As to quaternary structure, homohexamer; trimer of homodimers.

The enzyme catalyses a purine D-ribonucleoside + phosphate = a purine nucleobase + alpha-D-ribose 1-phosphate. The catalysed reaction is a purine 2'-deoxy-D-ribonucleoside + phosphate = a purine nucleobase + 2-deoxy-alpha-D-ribose 1-phosphate. Functionally, catalyzes the reversible phosphorolytic breakdown of the N-glycosidic bond in the beta-(deoxy)ribonucleoside molecules, with the formation of the corresponding free purine bases and pentose-1-phosphate. This Edwardsiella ictaluri (strain 93-146) protein is Purine nucleoside phosphorylase DeoD-type.